Here is a 298-residue protein sequence, read N- to C-terminus: Mitochondrial dicarboxylate transporter (298 aa).

Solcar repeat units follow at residues 11 to 95 (KNIK…LKEN), 103 to 195 (TNMA…FKNY), and 205 to 289 (SKNY…LKKH). 6 consecutive transmembrane segments (helical) span residues 17 to 37 (WWYGGAAGIFATMVTHPLDLA), 58 to 76 (ILANEGVVGLYSGLSAAVL), 105 to 126 (MAYLLPCSMFSGAIGGLAGNFA), 170 to 189 (GWKPNMVRGILMTASQVVTY), 211 to 231 (LTASLLAGLVATTVCSPADVM), and 265 to 283 (WLPSFTRLGPFTMLIFFAI).

It belongs to the mitochondrial carrier (TC 2.A.29) family. Homodimer. Binds to the TIM22 translocation complex during import.

It is found in the mitochondrion inner membrane. Mitochondrial dicarboxylic transporter catalyzing the exchange of dicarboxylic acids like malate and succinate for inorganic phosphate. Required for growth on ethanol and acetate. This is Mitochondrial dicarboxylate transporter (DIC1) from Saccharomyces cerevisiae (strain ATCC 204508 / S288c) (Baker's yeast).